The chain runs to 996 residues: MSLSNLSSSNSNGAFLDYGEFRSGVYIQTSNQILYFTDENGNKVGYQWKGLLPHTTTTNDPSTDGGISDTAWCSIVGSGFIEKLSKEGIDLSWKAHLPTVEVSYNLPHKSLKIWEEGTNSTDNDYWLYPGDGTVWNGIGVLGDIPDAPFKQIVPQNNVIEWSAIATEGQNQFTVPYEFTNISVFINGLLQNKSTGGYVVNGSTVTLNGSLKAGDDIHVVISNIPIKNINYITDVELSQPDAAQKIGLLHGGNIQNLQNFLSFDMFNIDKTGSTDVTSQINNIFSLANQLNIPIKQHDGTYLVSGSTIFTINTDCDLSGVTILPSSNFTGYFLYTQNEQPTTYNSSSSLVTLINSATINANDSILYGLINDTTLDGNAIFMKGNDPLYVARGTTKNWWCNTRISNRGKMDDYLKYGVSGINEVISLPISKKVTTIKLPNWDFINQPANNGVIRFNNISRYRIHGGSVFNRPLNDINKDPVIISINYAYDIILQDFYDEYPSWPLVGGSIAYAYTINFNYINRVTFKDINSQGYGWGIVGGQLATNITYLRCNINRVDMHDPFMGYLKILDCDLGYYGVSATGMGDMYIERTTFNIDDLAFNGWREVDGIINTRPDFGGWFDGGVYIKDITIIGDASKFREINNRGVSLFSAYSYNATLSYIPNGSPVEPWGFKEIIVNGLRCTKPITGKRFSSLVYAASVQNVDYFPRHVKFNNCDFNSSDVECIDLHGWKITPDNSSKTSISNTMNFKSTNFIEFTDCSFVGLEILRPYSSYDYMNLELKLNNCKYIGSNISPISFYTDQVGNYEFTNCDINFISDTTKSTSSLSNRQSSFVINGGQINSVSVPFSILYNSGYSTPVLVNNTIFKGSFSQSSVTSINLNVAEFAQLSNCRFYSNVNNSYISPALWLGSTSNSATSITVMRGNKINTVITNTTTVSGISIKTDIIPFGVASGHINGSFYVDATGTTGTYQLYLNSLNLKSQIGKIVSNGTISGIYLQ.

It localises to the virion. In terms of biological role, functions as a receptor binding protein (RBP) and probably mediates the attachment to the host capsular exopolysaccharides. Displays a depolymerase activity that specifically degrades the K64-type polysaccharides of Klebsiella pneumoniae capsule. The sequence is that of Depolymerase, capsule K64-specific from Klebsiella (Bacteriophage K64-1).